The sequence spans 1048 residues: Probable inactive receptor kinase At5g10020 (1048 aa).

A signal peptide spans 1–21 (MSHFLTFCFLSLLLLLHGANA). LRR repeat units follow at residues 100 to 120 (RLRN…PSLG), 124 to 146 (SLQH…ISEL), 148 to 169 (SLNH…GFRN), 172 to 194 (QLRS…FTEL), 196 to 217 (NVEF…PMEN), 224 to 246 (TLRH…ESIG), 250 to 272 (NLEI…GSQP), 273 to 294 (SLRI…ELLQ), 298 to 319 (PLLE…INSS), 320 to 342 (TLTM…FKSC), 365 to 387 (TPDV…TSAF), 389 to 411 (RLSV…WGDS), 412 to 433 (QFSV…SFFT), 436 to 457 (SLRS…RGSR), 469 to 491 (QMEL…IGTM), 493 to 516 (KIKV…NKLS), 517 to 539 (GLLF…LPSQ), and 540 to 560 (MVGF…DLRS). The helical transmembrane segment at 602–622 (IAIIVASVGAAIMILFVLFAY) threads the bilayer. A disordered region spans residues 696 to 733 (EQGAPATSAPTNLLDDYPAASGRKSSSGGSPLSSSPRF). Residues 716–733 (SGRKSSSGGSPLSSSPRF) show a composition bias toward low complexity. Ser-744 carries the post-translational modification Phosphoserine. One can recognise a Protein kinase domain in the interval 768–1045 (RAPAEVLGRS…IRQVLDHLTS (278 aa)). ATP contacts are provided by residues 774–782 (LGRSSHGTL) and Lys-796.

It belongs to the protein kinase superfamily.

The protein localises to the membrane. The sequence is that of Probable inactive receptor kinase At5g10020 from Arabidopsis thaliana (Mouse-ear cress).